A 103-amino-acid chain; its full sequence is Trp operon repressor homolog (103 aa).

A DNA-binding region spans residues 62 to 85; it reads QRKISELLGVGVATITRGSNELKH.

It belongs to the TrpR family. Homodimer.

Its subcellular location is the cytoplasm. Its function is as follows. This protein is an aporepressor. When complexed with L-tryptophan it binds the operator region of the trp operon and prevents the initiation of transcription. This chain is Trp operon repressor homolog, found in Photobacterium profundum (strain SS9).